The following is an 83-amino-acid chain: Mu-theraphotoxin-Hhn2p (83 aa).

The first 21 residues, 1–21, serve as a signal peptide directing secretion; sequence MKASMYLALAGLVLLFVVGYA. The propeptide occupies 22-48; sequence SESEEKEFPRELLSKIFAVDDFKGEER. 3 disulfide bridges follow: Cys50–Cys65, Cys57–Cys70, and Cys64–Cys77. Position 81 is a leucine amide (Leu81).

The protein belongs to the neurotoxin 10 (Hwtx-1) family. 15 (Hntx-3) subfamily. As to quaternary structure, monomer. In terms of tissue distribution, expressed by the venom gland.

The protein resides in the secreted. In terms of biological role, lethal neurotoxin. Selectively blocks tetrodotoxin-sensitive voltage-gated sodium channels (Nav). Does not affect tetrodotoxin-resistant voltage-gated sodium channels or calcium channels. This is Mu-theraphotoxin-Hhn2p from Cyriopagopus hainanus (Chinese bird spider).